A 63-amino-acid polypeptide reads, in one-letter code: Large ribosomal subunit protein uL30 (63 aa).

The protein belongs to the universal ribosomal protein uL30 family. Part of the 50S ribosomal subunit.

The polypeptide is Large ribosomal subunit protein uL30 (Rickettsia typhi (strain ATCC VR-144 / Wilmington)).